Consider the following 189-residue polypeptide: UPF0398 protein LCK_00599 (189 aa).

Belongs to the UPF0398 family.

The sequence is that of UPF0398 protein LCK_00599 from Leuconostoc citreum (strain KM20).